The sequence spans 615 residues: Elongation factor 4 (615 aa).

Residues 14-200 (QQIRNFCIIA…KVAELIPAPT (187 aa)) enclose the tr-type G domain. GTP-binding positions include 26–31 (DHGKST) and 147–150 (NKID).

Belongs to the TRAFAC class translation factor GTPase superfamily. Classic translation factor GTPase family. LepA subfamily.

It localises to the cell membrane. The enzyme catalyses GTP + H2O = GDP + phosphate + H(+). In terms of biological role, required for accurate and efficient protein synthesis under certain stress conditions. May act as a fidelity factor of the translation reaction, by catalyzing a one-codon backward translocation of tRNAs on improperly translocated ribosomes. Back-translocation proceeds from a post-translocation (POST) complex to a pre-translocation (PRE) complex, thus giving elongation factor G a second chance to translocate the tRNAs correctly. Binds to ribosomes in a GTP-dependent manner. The chain is Elongation factor 4 from Corynebacterium diphtheriae (strain ATCC 700971 / NCTC 13129 / Biotype gravis).